A 182-amino-acid chain; its full sequence is Adenine phosphoribosyltransferase 4 (182 aa).

This sequence belongs to the purine/pyrimidine phosphoribosyltransferase family. In terms of assembly, homodimer.

Its subcellular location is the cytoplasm. The catalysed reaction is AMP + diphosphate = 5-phospho-alpha-D-ribose 1-diphosphate + adenine. It participates in purine metabolism; AMP biosynthesis via salvage pathway; AMP from adenine: step 1/1. In terms of biological role, catalyzes a salvage reaction resulting in the formation of AMP, that is energically less costly than de novo synthesis. May contribute to the recycling of adenine into adenylate nucleotides and the inactivation of cytokinins by phosphoribosylation. Possesses low activity toward adenine, but can efficiently convert cytokinins from free bases (active form) to the corresponding nucleotides (inactive form). The chain is Adenine phosphoribosyltransferase 4 (APT4) from Arabidopsis thaliana (Mouse-ear cress).